Here is a 254-residue protein sequence, read N- to C-terminus: Phosphoribosylaminoimidazole-succinocarboxamide synthase (254 aa).

It belongs to the SAICAR synthetase family.

The catalysed reaction is 5-amino-1-(5-phospho-D-ribosyl)imidazole-4-carboxylate + L-aspartate + ATP = (2S)-2-[5-amino-1-(5-phospho-beta-D-ribosyl)imidazole-4-carboxamido]succinate + ADP + phosphate + 2 H(+). It functions in the pathway purine metabolism; IMP biosynthesis via de novo pathway; 5-amino-1-(5-phospho-D-ribosyl)imidazole-4-carboxamide from 5-amino-1-(5-phospho-D-ribosyl)imidazole-4-carboxylate: step 1/2. The sequence is that of Phosphoribosylaminoimidazole-succinocarboxamide synthase from Brucella abortus (strain S19).